Consider the following 626-residue polypeptide: DNA (cytosine-5)-methyltransferase DRM2 (626 aa).

UBA domains follow at residues 59 to 101 (GFSD…ISKY) and 109 to 150 (SSKS…LLSC). A compositionally biased stretch (acidic residues) spans 160–187 (VEEEDGIDWSSSDDDTNYTDMLNSDDEK). Disordered regions lie at residues 160–196 (VEEEDGIDWSSSDDDTNYTDMLNSDDEKDPNSNENGS) and 245–282 (TEHEEQKPRHNIKKRRFESKGEPRSSVDDEPIRLPNPM). A UBA 3 domain is found at 190–232 (NSNENGSKIRSLVKMGFSELEASLAVERCGENVDIAELTDFLC). Residues 262 to 276 (ESKGEPRSSVDDEPI) are compositionally biased toward basic and acidic residues. The 332-residue stretch at 295–626 (THRSLPELAR…EVVRARMRGS (332 aa)) folds into the SAM-dependent MTase DRM-type domain.

This sequence belongs to the class I-like SAM-binding methyltransferase superfamily. DRM-methyltransferase family. As to quaternary structure, interacts with RDM1. As to expression, expressed in roots, inflorescences and at lower levels in leaves.

The protein resides in the nucleus. The protein localises to the nucleoplasm. It carries out the reaction a 2'-deoxycytidine in DNA + S-adenosyl-L-methionine = a 5-methyl-2'-deoxycytidine in DNA + S-adenosyl-L-homocysteine + H(+). Involved in de novo DNA methylation. Controls asymmetric and CpNpG methylation. Required for FWA gene silencing but not for the maintenance of SUP gene silencing. Functionally redundant to CMT3 to maintain non-CpG methylation. Involved in RNA-directed DNA methylation (RdDM). Acts as major DNA methyltransferase in the RdDM pathway, and is essential for RNA-directed de novo DNA methylation of cytosines in all sequence contexts. Associates with long non-coding RNA (lncRNA) produced by RNA polymerase V (Pol V). This association is dependent on AGO4 and IDN2, and results in DNA methylation of RdDM target loci. In Arabidopsis thaliana (Mouse-ear cress), this protein is DNA (cytosine-5)-methyltransferase DRM2 (DRM2).